Here is a 261-residue protein sequence, read N- to C-terminus: Small ribosomal subunit protein uS2 (261 aa).

S2 carries the N-acetylserine modification. The segment at 211-261 (EQNAAEDSKAEDAEEAPVADAEPDWSGETEDVDWAESGATPAAEEAAASNW) is disordered. A compositionally biased stretch (acidic residues) spans 222–244 (DAEEAPVADAEPDWSGETEDVDW). The span at 245 to 261 (AESGATPAAEEAAASNW) shows a compositional bias: low complexity.

It belongs to the universal ribosomal protein uS2 family. Component of the small ribosomal subunit. Mature ribosomes consist of a small (40S) and a large (60S) subunit. The 40S subunit contains about 33 different proteins and 1 molecule of RNA (18S). The 60S subunit contains about 49 different proteins and 3 molecules of RNA (25S, 5.8S and 5S). Interacts with RPS21.

It localises to the cytoplasm. Its function is as follows. Required for the assembly and/or stability of the 40S ribosomal subunit. Required for the processing of the 20S rRNA-precursor to mature 18S rRNA in a late step of the maturation of 40S ribosomal subunits. This is Small ribosomal subunit protein uS2 from Meyerozyma guilliermondii (strain ATCC 6260 / CBS 566 / DSM 6381 / JCM 1539 / NBRC 10279 / NRRL Y-324) (Yeast).